Here is a 436-residue protein sequence, read N- to C-terminus: Coiled-coil domain-containing protein 71 (436 aa).

Residues 95 to 119 are disordered; it reads ATSLPARAPQTAKSVPTGQTTLLPV. A compositionally biased stretch (polar residues) spans 105–116; the sequence is TAKSVPTGQTTL. Position 129 is a phosphoserine (Ser-129). 2 disordered regions span residues 210–258 and 314–405; these read LRKG…MKGR and ALRG…KVDR. The stretch at 264–334 forms a coiled coil; the sequence is KTVRGKAPRT…QAKAKAARTK (71 aa). The span at 329 to 340 shows a compositional bias: basic residues; that stretch reads KAARTKHKKRPK. The span at 344–359 shows a compositional bias: polar residues; it reads QTRTGRTSLKNSSETV. Basic residues predominate over residues 373–386; sequence PPKKRARCVPRSKA.

The chain is Coiled-coil domain-containing protein 71 (Ccdc71) from Rattus norvegicus (Rat).